The primary structure comprises 94 residues: Secretoglobin family 1C member 1 (94 aa).

The first 22 residues, 1–22 (MKGSSALLVALTVLCICGLTRA), serve as a signal peptide directing secretion.

This sequence belongs to the secretoglobin family. As to expression, expressed in the olfactory mucosa.

The protein localises to the secreted. The polypeptide is Secretoglobin family 1C member 1 (Scgb1c1) (Rattus norvegicus (Rat)).